We begin with the raw amino-acid sequence, 82 residues long: MNKPVHNNEHRRKRFNKKCPFVSAGWKTIDYKDVETLKKFITERGKVLPRRITGVSSRFQGVLSQAIKRARHLGLLPFVGED.

It belongs to the bacterial ribosomal protein bS18 family. Part of the 30S ribosomal subunit. Forms a tight heterodimer with protein bS6.

Its function is as follows. Binds as a heterodimer with protein bS6 to the central domain of the 16S rRNA, where it helps stabilize the platform of the 30S subunit. This chain is Small ribosomal subunit protein bS18, found in Chlamydia pneumoniae (Chlamydophila pneumoniae).